The chain runs to 159 residues: Methyl-coenzyme M reductase operon protein D (159 aa).

As to quaternary structure, MCR is composed of three subunits: alpha, beta, and gamma. The function of proteins C and D is not known.

The sequence is that of Methyl-coenzyme M reductase operon protein D (mcrD) from Methanococcus voltae.